A 140-amino-acid chain; its full sequence is Small ribosomal subunit protein uS19 (140 aa).

The protein belongs to the universal ribosomal protein uS19 family.

Protein S19 forms a complex with S13 that binds strongly to the 16S ribosomal RNA. This chain is Small ribosomal subunit protein uS19 (rps19), found in Sulfurisphaera tokodaii (strain DSM 16993 / JCM 10545 / NBRC 100140 / 7) (Sulfolobus tokodaii).